Reading from the N-terminus, the 164-residue chain is UPF0304 protein ECA3037 (164 aa).

This sequence belongs to the UPF0304 family.

The chain is UPF0304 protein ECA3037 from Pectobacterium atrosepticum (strain SCRI 1043 / ATCC BAA-672) (Erwinia carotovora subsp. atroseptica).